The following is a 486-amino-acid chain: MNTQQLAKLRSIVPEMHRVRHIHFVGIGGAGMGGIAEVLANEGYEISGSDLAPNAVTQQLTELGAQIYFHHRAENVLNASVVVVSSAITADNPEIVAAHDARIPVIRRAEMLAELMRFRHGIAIAGTHGKTTTTAMVTSIYAEAGLDPTFVNGGLVKAAGTHARLGSSRYLIAEADESDASFLHLQPMVAIVTNIEADHMDTYQGDFENLKQTFINFLHNLPFYGQAVMCIDDAVIRELLPRVGRHITTYGFSDDADVRVSGYRQVGAQGHFTLERKDKPLLTVTLNAPGRHNALNAAAAVAVATDEGIDDEAILRALERFQGTGRRFDFLGEYPLELVNGQSGTAMLVDDYGHHPTEVDATIKAARAGWPDKRLVMIFQPHRYTRTRDLYDDFAHVLSQVDVLLMLDVYSAGESPIPGADSRSLCRTIRGRGKIDPILVTDVDTLPELLSQALRGEDLILVQGAGNIGKLARKLADSRLQPQISE.

126-132 serves as a coordination point for ATP; sequence GTHGKTT.

This sequence belongs to the MurCDEF family.

It is found in the cytoplasm. It carries out the reaction UDP-N-acetyl-alpha-D-muramate + L-alanine + ATP = UDP-N-acetyl-alpha-D-muramoyl-L-alanine + ADP + phosphate + H(+). It functions in the pathway cell wall biogenesis; peptidoglycan biosynthesis. Functionally, cell wall formation. The polypeptide is UDP-N-acetylmuramate--L-alanine ligase (Pectobacterium carotovorum subsp. carotovorum (strain PC1)).